Reading from the N-terminus, the 89-residue chain is Large ribosomal subunit protein bL27 (89 aa).

The disordered stretch occupies residues 1 to 22; it reads MAHKKAGGSSRNGRDSESKRLG.

The protein belongs to the bacterial ribosomal protein bL27 family.

The sequence is that of Large ribosomal subunit protein bL27 from Rhizobium etli (strain CIAT 652).